Here is a 380-residue protein sequence, read N- to C-terminus: Calreticulin-3 (380 aa).

The signal sequence occupies residues 1–19 (MVSARALLWAICVLRVALA). The N-domain stretch occupies residues 20-197 (TVYFQEEFLD…GQSIESGSIE (178 aa)). Residue Asn42 is glycosylated (N-linked (GlcNAc...) asparagine). Tyr109, Lys111, Tyr128, and Asp135 together coordinate an alpha-D-glucoside. A disulfide bridge links Cys137 with Cys163. 7 repeat units span residues 191-202 (IESGSIEYDWNL), 209-220 (EKTSLDSRDWDQ), 222-231 (EGSKVQDWEK), 235-246 (DAGASKPSDWNS), 250-256 (GDWLQKP), 260-268 (DGLKAEGID), and 270-280 (DVWLHQKMRPA). Residues 191–246 (IESGSIEYDWNLTSLRKTEKTSLDSRDWDQVEGSKVQDWEKHFLDAGASKPSDWNS) are 4 X approximate repeats. The interval 198–291 (YDWNLTSLRK…YLTQYDLSEF (94 aa)) is P-domain. An N-linked (GlcNAc...) asparagine glycan is attached at Asn201. A 3 X approximate repeats region spans residues 250 to 280 (GDWLQKPPYEDGLKAEGIDKDVWLHQKMRPA). Positions 292 to 380 (ENIGAIGLEL…FSRFHRQGEL (89 aa)) are C-domain. An alpha-D-glucoside is bound at residue Glu300. A Prevents secretion from ER motif is present at residues 377–380 (QGEL).

It belongs to the calreticulin family. Component of an EIF2 complex at least composed of CELF1/CUGBP1, CALR, CALR3, EIF2S1, EIF2S2, HSP90B1 and HSPA5. Testis specific, absent in mature sperm.

It localises to the endoplasmic reticulum lumen. Its function is as follows. CALR3 capacity for calcium-binding may be absent or much lower than that of CALR. During spermatogenesis, may act as a lectin-independent chaperone for specific client proteins such as ADAM3. Required for sperm fertility. The protein is Calreticulin-3 (Calr3) of Mus musculus (Mouse).